Here is a 413-residue protein sequence, read N- to C-terminus: Putative glutamate synthase [NADPH] small chain (413 aa).

Positions 33, 37, 43, and 47 each coordinate [4Fe-4S] cluster.

Aggregate of 4 catalytic active heterodimers, consisting of a large and a small subunit. [4Fe-4S] cluster is required as a cofactor.

The enzyme catalyses 2 L-glutamate + NADP(+) = L-glutamine + 2-oxoglutarate + NADPH + H(+). It participates in amino-acid biosynthesis; L-glutamate biosynthesis via GLT pathway; L-glutamate from 2-oxoglutarate and L-glutamine (NADP(+) route): step 1/1. Its pathway is energy metabolism; nitrogen metabolism. This is Putative glutamate synthase [NADPH] small chain (gltD) from Cereibacter sphaeroides (Rhodobacter sphaeroides).